The chain runs to 180 residues: Glycodelin (180 aa).

Positions 1–18 are cleaved as a signal peptide; sequence MLCLLLTLGVALVCGVPA. N-linked (GlcNAc...) (complex) asparagine glycosylation is found at Asn-46 and Asn-81. 2 cysteine pairs are disulfide-bonded: Cys-84–Cys-178 and Cys-124–Cys-137.

Belongs to the calycin superfamily. Lipocalin family. In terms of assembly, homodimer. In terms of processing, four distinct glycoforms A, C, F and S arise from different N-linked oligosaccharide chains at amino acid residues Asn-46 and Asn-81. Glycodelin-A and -F are taken up by the cumulus cells in which partial deglycosylation takes place to produce glycodelin-C. As to expression, this protein is, the main protein synthesized and secreted in the endometrium from mid-luteal phase of the menstrual cycle and during the first semester of pregnancy. Glycodelin-A is expressed in amniotic fluid, endometrium/decidua and maternal serum (at protein level). Glycodelin-F is expressed in follicular fluid, luteinized granulosa cells and the oviduct (at protein level). Glycodelin-S is expressed in seminal plasma and seminal vesicles (at protein level). Glycodelin-C is detected in cumulus cells (at protein level), but cumulus cells do not synthesize Glycodelin-C but take up and convert glycodelin-A and -F vis glycan remodeling.

The protein resides in the secreted. Its function is as follows. Glycoprotein that regulates critical steps during fertilization and also has immunomonomodulatory effects. Four glycoforms, namely glycodelin-S, -A, -F and -C have been identified in reproductive tissues that differ in glycosylation and biological activity. Glycodelin-A has contraceptive and immunosuppressive activities. Glycodelin-C stimulates binding of spermatozoa to the zona pellucida. Glycodelin-F inhibits spermatozoa-zona pellucida binding and significantly suppresses progesterone-induced acrosome reaction of spermatozoa. Glycodelin-S in seminal plasma maintains the uncapacitated state of human spermatozoa. This Homo sapiens (Human) protein is Glycodelin (PAEP).